We begin with the raw amino-acid sequence, 317 residues long: Lipoyl synthase (317 aa).

[4Fe-4S] cluster-binding residues include Cys55, Cys60, Cys66, Cys81, Cys85, Cys88, and Ser292. The Radical SAM core domain maps to 67–281; the sequence is WEDREATFLI…ERYATEIGFA (215 aa).

It belongs to the radical SAM superfamily. Lipoyl synthase family. It depends on [4Fe-4S] cluster as a cofactor.

The protein localises to the cytoplasm. The catalysed reaction is [[Fe-S] cluster scaffold protein carrying a second [4Fe-4S](2+) cluster] + N(6)-octanoyl-L-lysyl-[protein] + 2 oxidized [2Fe-2S]-[ferredoxin] + 2 S-adenosyl-L-methionine + 4 H(+) = [[Fe-S] cluster scaffold protein] + N(6)-[(R)-dihydrolipoyl]-L-lysyl-[protein] + 4 Fe(3+) + 2 hydrogen sulfide + 2 5'-deoxyadenosine + 2 L-methionine + 2 reduced [2Fe-2S]-[ferredoxin]. Its pathway is protein modification; protein lipoylation via endogenous pathway; protein N(6)-(lipoyl)lysine from octanoyl-[acyl-carrier-protein]: step 2/2. Catalyzes the radical-mediated insertion of two sulfur atoms into the C-6 and C-8 positions of the octanoyl moiety bound to the lipoyl domains of lipoate-dependent enzymes, thereby converting the octanoylated domains into lipoylated derivatives. The polypeptide is Lipoyl synthase (Mycolicibacterium gilvum (strain PYR-GCK) (Mycobacterium gilvum (strain PYR-GCK))).